A 119-amino-acid polypeptide reads, in one-letter code: MIQKETNLKPIDKCGVWSVRAFHLYGGSFRNQSTISNFLKVSVKKTRANNWVPKKTKLKAIIVTLKKELKKIDGSYIKFRTNNVVLLKKRLTPKGKILMGPVSSNLRRKRFLTSFCGSI.

Belongs to the universal ribosomal protein uL14 family.

It is found in the mitochondrion. The polypeptide is Large ribosomal subunit protein uL14m (Tetrahymena pyriformis).